The primary structure comprises 378 residues: Squalene methyltransferase 2 (378 aa).

A helical transmembrane segment spans residues 17-37 (LLTVKGATGLIAALILGYIII).

This sequence belongs to the class I-like SAM-binding methyltransferase superfamily. Erg6/SMT family.

The protein localises to the microsome membrane. It catalyses the reaction squalene + 2 S-adenosyl-L-methionine = 3,22-dimethyl-1,2,23,24-tetradehydro-2,3,22,23-tetrahydrosqualene + 2 S-adenosyl-L-homocysteine + 2 H(+). Converts squalene to mono- and dimethyl derivatives, but not to tri- and tetramethylated products. Unable to methylate cycloartenol, zymosterol or lanosterol. Methylates both C-3 and C22 positions, but only C-3 position in monomethylated products. Produces mainly monomethylated squalene and only 20% of dimethylated squalene. This is Squalene methyltransferase 2 (TMT-2) from Botryococcus braunii (Green alga).